The chain runs to 161 residues: Ribosome maturation factor RimP (161 aa).

This sequence belongs to the RimP family.

The protein resides in the cytoplasm. Its function is as follows. Required for maturation of 30S ribosomal subunits. This chain is Ribosome maturation factor RimP, found in Rickettsia massiliae (strain Mtu5).